The sequence spans 207 residues: Abscisic acid receptor PYL9 (207 aa).

Residues 31 to 197 form an START-like region; sequence FPPSTTTATT…NLQMLAAVAE (167 aa). Abscisate contacts are provided by residues Lys-74, 104-109, 131-137, and Glu-162; these read ASTSTE and RLRNYRS. A Gate loop motif is present at residues 100 to 104; the sequence is SGLPA. A Latch loop motif is present at residues 130 to 132; it reads HRL.

It belongs to the PYR/PYL/RCAR abscisic acid intracellular receptor family. As to quaternary structure, homodimer. Interacts with PP2C06. Interacts with PP2C50. Binding to PP2C50 is dependent on the presence of abscisic acid (ABA). Interacts with PP2C30 and PP2C53. Binding to PP2C30 and PP2C53 is dependent on the presence of ABA.

The protein localises to the cytoplasm. It is found in the cytosol. Its subcellular location is the nucleus. In terms of biological role, involved in abscisic acid (ABA) signaling during seed germination and abiotic stress response. Acts as a positive regulator of ABA-mediated inhibition of seed germination, and tolerance to drought and cold stresses. Inhibits the activity of the protein phosphatases PP2C06 and PP2C09 when activated by abscisic acid (ABA). The sequence is that of Abscisic acid receptor PYL9 from Oryza sativa subsp. japonica (Rice).